A 198-amino-acid chain; its full sequence is Small ribosomal subunit protein uS4 (198 aa).

A disordered region spans residues 26–45 (LKKRPYAPGQHGQRRSKLSN). The S4 RNA-binding domain occupies 91-154 (SRLDNVVYRL…KNLTIVKEAL (64 aa)).

It belongs to the universal ribosomal protein uS4 family. As to quaternary structure, part of the 30S ribosomal subunit. Contacts protein S5. The interaction surface between S4 and S5 is involved in control of translational fidelity.

Functionally, one of the primary rRNA binding proteins, it binds directly to 16S rRNA where it nucleates assembly of the body of the 30S subunit. Its function is as follows. With S5 and S12 plays an important role in translational accuracy. The chain is Small ribosomal subunit protein uS4 from Acholeplasma laidlawii (strain PG-8A).